The chain runs to 208 residues: Guanylate kinase (208 aa).

The Guanylate kinase-like domain occupies 8–187; that stretch reads GVCLVISAPS…AISQARSVLT (180 aa). 15-22 provides a ligand contact to ATP; it reads APSGAGKS.

The protein belongs to the guanylate kinase family.

It localises to the cytoplasm. It catalyses the reaction GMP + ATP = GDP + ADP. Its function is as follows. Essential for recycling GMP and indirectly, cGMP. The polypeptide is Guanylate kinase (Gluconobacter oxydans (strain 621H) (Gluconobacter suboxydans)).